A 430-amino-acid chain; its full sequence is Purine nucleoside phosphorylase LACC1 (430 aa).

N6-acetyllysine is present on K247. Zn(2+)-binding residues include H250, C284, and H301.

This sequence belongs to the purine nucleoside phosphorylase YfiH/LACC1 family. In terms of assembly, interacts with FASN. Interacts with SDHA. Interacts with ATF6, EIF2AK3 and ERN1. In terms of processing, phosphorylated on tyrosine residues. As to expression, ubiquitously expressed, with higher expression levels in immune-related tissues such as lymph nodes and spleen. Expressed in both intestinal and peripheral myeloid-derived cells.

The protein localises to the cytoplasm. It localises to the nucleus. The protein resides in the endoplasmic reticulum. Its subcellular location is the peroxisome. The catalysed reaction is adenosine + phosphate = alpha-D-ribose 1-phosphate + adenine. The enzyme catalyses inosine + phosphate = alpha-D-ribose 1-phosphate + hypoxanthine. It carries out the reaction guanosine + phosphate = alpha-D-ribose 1-phosphate + guanine. It catalyses the reaction S-methyl-5'-thioadenosine + phosphate = 5-(methylsulfanyl)-alpha-D-ribose 1-phosphate + adenine. The catalysed reaction is adenosine + H2O + H(+) = inosine + NH4(+). Purine nucleoside enzyme that catalyzes the phosphorolysis of adenosine, guanosine and inosine nucleosides, yielding D-ribose 1-phosphate and the respective free bases, adenine, guanine and hypoxanthine. Also catalyzes the phosphorolysis of S-methyl-5'-thioadenosine into adenine and S-methyl-5-thio-alpha-D-ribose 1-phosphate. Also has adenosine deaminase activity. Acts as a regulator of innate immunity in macrophages by modulating the purine nucleotide metabolism, thereby regulating the metabolic function and bioenergetic state of macrophages. Enables a purine nucleotide cycle between adenosine and inosine monophosphate and adenylosuccinate that prevents cytoplasmic acidification and balances the cytoplasmic-mitochondrial redox interface. The purine nucleotide cycle consumes aspartate and releases fumarate in a manner involving fatty acid oxidation and ATP-citrate lyase activity. Participates in pattern recognition receptor (PRR)-induced cytokines in macrophages: associates with the NOD2-signaling complex and promotes optimal NOD2-induced signaling, cytokine secretion and bacterial clearance. Localizes to the endoplasmic reticulum upon PRR stimulation of macrophages and associates with endoplasmic reticulum-stress sensors, promoting the endoplasmic reticulum unfolded protein response (UPR). Does not show laccase activity. This chain is Purine nucleoside phosphorylase LACC1, found in Homo sapiens (Human).